The chain runs to 259 residues: 3-deoxy-manno-octulosonate cytidylyltransferase (259 aa).

The protein belongs to the KdsB family.

The protein localises to the cytoplasm. It catalyses the reaction 3-deoxy-alpha-D-manno-oct-2-ulosonate + CTP = CMP-3-deoxy-beta-D-manno-octulosonate + diphosphate. The protein operates within nucleotide-sugar biosynthesis; CMP-3-deoxy-D-manno-octulosonate biosynthesis; CMP-3-deoxy-D-manno-octulosonate from 3-deoxy-D-manno-octulosonate and CTP: step 1/1. It participates in bacterial outer membrane biogenesis; lipopolysaccharide biosynthesis. Activates KDO (a required 8-carbon sugar) for incorporation into bacterial lipopolysaccharide in Gram-negative bacteria. The chain is 3-deoxy-manno-octulosonate cytidylyltransferase from Xanthomonas oryzae pv. oryzae (strain KACC10331 / KXO85).